A 119-amino-acid chain; its full sequence is Large ribosomal subunit protein uL18 (119 aa).

The protein belongs to the universal ribosomal protein uL18 family. As to quaternary structure, part of the 50S ribosomal subunit; part of the 5S rRNA/L5/L18/L25 subcomplex. Contacts the 5S and 23S rRNAs.

Its function is as follows. This is one of the proteins that bind and probably mediate the attachment of the 5S RNA into the large ribosomal subunit, where it forms part of the central protuberance. The chain is Large ribosomal subunit protein uL18 from Endomicrobium trichonymphae.